Reading from the N-terminus, the 209-residue chain is GTP-binding protein RHB1 (209 aa).

Residue Met-1 is modified to N-acetylmethionine. GTP is bound by residues Gly-28, Lys-29, Thr-30, Thr-31, Val-42, Tyr-45, Thr-48, Asp-132, and Ala-172. Thr-30 is a Mg(2+) binding site. The Effector region signature appears at 45–53 (YYPTIENEF). Thr-48 is a binding site for Mg(2+). A Cysteine methyl ester modification is found at Cys-206. Cys-206 is lipidated: S-farnesyl cysteine. The propeptide at 207–209 (SIM) is removed in mature form.

Belongs to the small GTPase superfamily. Rheb family. As to quaternary structure, interacts with BTN2.

The protein localises to the cell membrane. The enzyme catalyses GTP + H2O = GDP + phosphate + H(+). Its function is as follows. Binds GTP and exhibits intrinsic GTPase activity. Involved in the regulation of arginine and lysine uptake. Acts through the CAN1 permease. The sequence is that of GTP-binding protein RHB1 (RHB1) from Saccharomyces cerevisiae (strain ATCC 204508 / S288c) (Baker's yeast).